The following is a 702-amino-acid chain: Ribosomal RNA large subunit methyltransferase K/L (702 aa).

One can recognise a THUMP domain in the interval 43 to 154; sequence LIYQSLMWSR…KETASIALDL (112 aa).

Belongs to the methyltransferase superfamily. RlmKL family.

It localises to the cytoplasm. The enzyme catalyses guanosine(2445) in 23S rRNA + S-adenosyl-L-methionine = N(2)-methylguanosine(2445) in 23S rRNA + S-adenosyl-L-homocysteine + H(+). The catalysed reaction is guanosine(2069) in 23S rRNA + S-adenosyl-L-methionine = N(2)-methylguanosine(2069) in 23S rRNA + S-adenosyl-L-homocysteine + H(+). In terms of biological role, specifically methylates the guanine in position 2445 (m2G2445) and the guanine in position 2069 (m7G2069) of 23S rRNA. The polypeptide is Ribosomal RNA large subunit methyltransferase K/L (Salmonella typhi).